A 109-amino-acid polypeptide reads, in one-letter code: Movement protein (109 aa).

A disordered region spans residues 1–28 (MDSFGRAPPLWPQSALPRVPGAAPSSSG). The chain crosses the membrane as a helical span at residues 34–54 (VGEIAIFTFVAVLALYLLWSW).

Belongs to the mastrevirus movement protein family. In terms of assembly, interacts with the capsid protein (CP). Part of a MP-CP-viral DNA complex.

It localises to the host membrane. In terms of biological role, involved in the viral transport within, and between cells. This chain is Movement protein, found in Sugarcane streak virus (isolate South Africa) (SSV).